We begin with the raw amino-acid sequence, 224 residues long: Peptidyl-prolyl cis-trans isomerase FKBP3 (224 aa).

N-acetylalanine is present on A2. Position 36 is a phosphoserine (S36). Residues 89 to 102 are compositionally biased toward basic and acidic residues; that stretch reads KLNEDKPKETKSEE. The segment at 89–111 is disordered; the sequence is KLNEDKPKETKSEETLDEGPPKY. K99 is subject to N6-acetyllysine. One can recognise a PPIase FKBP-type domain in the interval 128–224; the sequence is GDVVHCWYTG…TFEVELVDID (97 aa). S152 is subject to Phosphoserine. Position 170 is an N6-acetyllysine (K170).

This sequence belongs to the FKBP-type PPIase family.

The protein resides in the nucleus. It catalyses the reaction [protein]-peptidylproline (omega=180) = [protein]-peptidylproline (omega=0). With respect to regulation, inhibited preferentially by rapamycin over FK506. Its function is as follows. FK506- and rapamycin-binding proteins (FKBPs) constitute a family of receptors for the two immunosuppressants which inhibit T-cell proliferation by arresting two distinct cytoplasmic signal transmission pathways. PPIases accelerate the folding of proteins. The polypeptide is Peptidyl-prolyl cis-trans isomerase FKBP3 (FKBP3) (Homo sapiens (Human)).